Here is a 279-residue protein sequence, read N- to C-terminus: Probable endonuclease 4 (279 aa).

Zn(2+)-binding residues include histidine 69, histidine 109, glutamate 145, aspartate 179, histidine 182, histidine 216, aspartate 229, histidine 231, and glutamate 261.

The protein belongs to the AP endonuclease 2 family. Zn(2+) is required as a cofactor.

The enzyme catalyses Endonucleolytic cleavage to 5'-phosphooligonucleotide end-products.. Its function is as follows. Endonuclease IV plays a role in DNA repair. It cleaves phosphodiester bonds at apurinic or apyrimidinic (AP) sites, generating a 3'-hydroxyl group and a 5'-terminal sugar phosphate. The chain is Probable endonuclease 4 from Desulforapulum autotrophicum (strain ATCC 43914 / DSM 3382 / VKM B-1955 / HRM2) (Desulfobacterium autotrophicum).